A 184-amino-acid chain; its full sequence is ADP-ribosylation factor-like protein 8c (184 aa).

Residues 1-18 (MGLWDSLLNWLRSLFFKQ) constitute an intramembrane region (note=Mediates targeting to membranes). GTP contacts are provided by residues 29–34 (NAGKTS), 48–51 (MIPT), 70–74 (DLGGQ), and 129–132 (NKID).

It belongs to the small GTPase superfamily. Arf family. In terms of assembly, interacts with tubulin.

Its subcellular location is the late endosome membrane. The protein localises to the lysosome membrane. It localises to the cytoplasm. It is found in the cytoskeleton. The protein resides in the spindle. Its function is as follows. May play a role in lysosome motility. May play a role in chromosome segregation. Functionally, (Microbial infection) Component of tomato mosaic virus (ToMV) RNA replication complexes. Required for tobamovirus multiplication, especially for efficient negative-strand RNA synthesis and viral RNA capping. The polypeptide is ADP-ribosylation factor-like protein 8c (Arabidopsis thaliana (Mouse-ear cress)).